The following is a 348-amino-acid chain: Neutral peroxidase (348 aa).

An N-terminal signal peptide occupies residues 1–20; the sequence is MASFVARLTLALSFIALALA. Positions 21 to 67 are excised as a propeptide; it reads GYSLVQNTLSSPTHTRLNLIPTWLDSTFDSADVLSYLGFGKSSGRLS. Cystine bridges form between C71–C149, C102–C107, C156–C344, and C235–C256. H100 acts as the Proton acceptor in catalysis. Ca(2+) is bound by residues D101, V104, G106, and D108. 5 N-linked (GlcNAc...) asparagine glycosylation sites follow: N114, N118, N173, N177, and N189. A substrate-binding site is contributed by P198. N-linked (GlcNAc...) asparagine glycosylation is present at N203. H228 is a binding site for heme b. Residue T229 participates in Ca(2+) binding. 2 N-linked (GlcNAc...) asparagine glycosylation sites follow: N247 and N261. Ca(2+)-binding residues include D269, S271, and D276. N300 carries N-linked (GlcNAc...) asparagine glycosylation.

This sequence belongs to the peroxidase family. Classical plant (class III) peroxidase subfamily. Ca(2+) is required as a cofactor. Heme b serves as cofactor. As to expression, highly expressed in suspension cultured cells. Weak expression also found in the stems of intact plants. No expression in leaf, tuberous root and non-tuberous root.

It localises to the secreted. The enzyme catalyses 2 a phenolic donor + H2O2 = 2 a phenolic radical donor + 2 H2O. In terms of biological role, removal of H(2)O(2), oxidation of toxic reductants, biosynthesis and degradation of lignin, suberization, auxin catabolism, response to environmental stresses such as wounding, pathogen attack and oxidative stress. These functions might be dependent on each isozyme/isoform in each plant tissue. Functionally, may contribute to protection against cold-induced oxidative stress. The sequence is that of Neutral peroxidase from Ipomoea batatas (Sweet potato).